The primary structure comprises 489 residues: Rhamnulokinase (489 aa).

Position 13–17 (13–17 (ASSGR)) interacts with ATP. A disulfide bridge links cysteine 68 with cysteine 222. Substrate contacts are provided by residues glycine 83 and 236–238 (HDT). Aspartate 237 functions as the Proton acceptor in the catalytic mechanism. Threonine 259 contributes to the ATP binding site. Substrate is bound at residue asparagine 296. Glutamine 304 provides a ligand contact to ATP. Cysteine 353 and cysteine 370 form a disulfide bridge. ATP is bound at residue glycine 402. An intrachain disulfide couples cysteine 413 to cysteine 417.

It belongs to the rhamnulokinase family. Monomer. The cofactor is Mg(2+).

It catalyses the reaction L-rhamnulose + ATP = L-rhamnulose 1-phosphate + ADP + H(+). Its pathway is carbohydrate degradation; L-rhamnose degradation; glycerone phosphate from L-rhamnose: step 2/3. Involved in the catabolism of L-rhamnose (6-deoxy-L-mannose). Catalyzes the transfer of the gamma-phosphate group from ATP to the 1-hydroxyl group of L-rhamnulose to yield L-rhamnulose 1-phosphate. This Escherichia coli O127:H6 (strain E2348/69 / EPEC) protein is Rhamnulokinase.